Consider the following 647-residue polypeptide: Macrolide export ATP-binding/permease protein MacB (647 aa).

In terms of domain architecture, ABC transporter spans 7–245; sequence IRLEDICKTF…EATLQPHEEI (239 aa). An ATP-binding site is contributed by 43–50; it reads GASGSGKS. 4 consecutive transmembrane segments (helical) span residues 274 to 294, 529 to 549, 573 to 593, and 610 to 630; these read VLTLLGIIIGVSSVVTMLAIG, VAAISLLVGGIGVMNIMLVSV, FIIEALSVSAIGGAIGVILGL, and FGPVLLAFACAFATGLIFGFL.

It belongs to the ABC transporter superfamily. Macrolide exporter (TC 3.A.1.122) family. In terms of assembly, homodimer.

The protein resides in the cell inner membrane. In terms of biological role, non-canonical ABC transporter that contains transmembrane domains (TMD), which form a pore in the inner membrane, and an ATP-binding domain (NBD), which is responsible for energy generation. Confers resistance against macrolides. In Brucella melitensis biotype 1 (strain ATCC 23456 / CCUG 17765 / NCTC 10094 / 16M), this protein is Macrolide export ATP-binding/permease protein MacB.